The primary structure comprises 230 residues: Small ribosomal subunit protein uS3 (230 aa).

In terms of domain architecture, KH type-2 spans valine 39 to lysine 107.

The protein belongs to the universal ribosomal protein uS3 family. Part of the 30S ribosomal subunit. Forms a tight complex with proteins S10 and S14.

Binds the lower part of the 30S subunit head. Binds mRNA in the 70S ribosome, positioning it for translation. The polypeptide is Small ribosomal subunit protein uS3 (Vesicomyosocius okutanii subsp. Calyptogena okutanii (strain HA)).